The chain runs to 145 residues: Putative antiporter subunit mnhG2 (145 aa).

Helical transmembrane passes span 11 to 31 (IAAV…IGIV), 51 to 71 (VLLT…FFSV), and 72 to 92 (RLLL…HLVA).

The protein belongs to the CPA3 antiporters (TC 2.A.63) subunit G family. As to quaternary structure, may form a heterooligomeric complex that consists of seven subunits: mnhA2, mnhB2, mnhC2, mnhD2, mnhE2, mnhF2 and mnhG2.

The protein resides in the cell membrane. In Staphylococcus aureus (strain bovine RF122 / ET3-1), this protein is Putative antiporter subunit mnhG2 (mnhG2).